A 967-amino-acid chain; its full sequence is Leucine--tRNA ligase (967 aa).

The 'HIGH' region motif lies at 43–53 (PYLSGHLHVGH). Residues 650–654 (KMSKS) carry the 'KMSKS' region motif. Position 653 (Lys-653) interacts with ATP.

The protein belongs to the class-I aminoacyl-tRNA synthetase family.

It is found in the cytoplasm. It catalyses the reaction tRNA(Leu) + L-leucine + ATP = L-leucyl-tRNA(Leu) + AMP + diphosphate. This chain is Leucine--tRNA ligase, found in Thermococcus kodakarensis (strain ATCC BAA-918 / JCM 12380 / KOD1) (Pyrococcus kodakaraensis (strain KOD1)).